The primary structure comprises 203 residues: Dephospho-CoA kinase (203 aa).

A DPCK domain is found at 4-203; sequence VIGITGGIAT…EEGYIQSESE (200 aa). Position 12–17 (12–17) interacts with ATP; the sequence is ATGKST.

The protein belongs to the CoaE family.

It localises to the cytoplasm. It carries out the reaction 3'-dephospho-CoA + ATP = ADP + CoA + H(+). It functions in the pathway cofactor biosynthesis; coenzyme A biosynthesis; CoA from (R)-pantothenate: step 5/5. In terms of biological role, catalyzes the phosphorylation of the 3'-hydroxyl group of dephosphocoenzyme A to form coenzyme A. This is Dephospho-CoA kinase from Staphylococcus epidermidis (strain ATCC 12228 / FDA PCI 1200).